Here is a 113-residue protein sequence, read N- to C-terminus: Hydrogenase maturation factor HypA (113 aa).

His-2 is a Ni(2+) binding site. Zn(2+) contacts are provided by Cys-73, Cys-76, Cys-89, and Cys-92.

This sequence belongs to the HypA/HybF family.

Its function is as follows. Involved in the maturation of [NiFe] hydrogenases. Required for nickel insertion into the metal center of the hydrogenase. This is Hydrogenase maturation factor HypA from Cereibacter sphaeroides (strain ATCC 17023 / DSM 158 / JCM 6121 / CCUG 31486 / LMG 2827 / NBRC 12203 / NCIMB 8253 / ATH 2.4.1.) (Rhodobacter sphaeroides).